Reading from the N-terminus, the 310-residue chain is Acetyl-coenzyme A carboxylase carboxyl transferase subunit beta (310 aa).

The region spanning 27–296 is the CoA carboxyltransferase N-terminal domain; it reads LWRKCPNCEA…QDRDAEPDDT (270 aa). Zn(2+) contacts are provided by Cys-31, Cys-34, Cys-50, and Cys-53. The C4-type zinc-finger motif lies at 31–53; it reads CPNCEAVLYLPELERHQSVCPKC. Positions 282-310 are disordered; the sequence is THQPHQDRDAEPDDTASQSTLDEFSQADH.

This sequence belongs to the AccD/PCCB family. In terms of assembly, acetyl-CoA carboxylase is a heterohexamer composed of biotin carboxyl carrier protein (AccB), biotin carboxylase (AccC) and two subunits each of ACCase subunit alpha (AccA) and ACCase subunit beta (AccD). It depends on Zn(2+) as a cofactor.

It is found in the cytoplasm. It catalyses the reaction N(6)-carboxybiotinyl-L-lysyl-[protein] + acetyl-CoA = N(6)-biotinyl-L-lysyl-[protein] + malonyl-CoA. The protein operates within lipid metabolism; malonyl-CoA biosynthesis; malonyl-CoA from acetyl-CoA: step 1/1. Its function is as follows. Component of the acetyl coenzyme A carboxylase (ACC) complex. Biotin carboxylase (BC) catalyzes the carboxylation of biotin on its carrier protein (BCCP) and then the CO(2) group is transferred by the transcarboxylase to acetyl-CoA to form malonyl-CoA. This chain is Acetyl-coenzyme A carboxylase carboxyl transferase subunit beta, found in Chromohalobacter salexigens (strain ATCC BAA-138 / DSM 3043 / CIP 106854 / NCIMB 13768 / 1H11).